The chain runs to 314 residues: tRNA-cytidine(32) 2-sulfurtransferase (314 aa).

The PP-loop motif motif lies at 58-63 (SGGKDS). 3 residues coordinate [4Fe-4S] cluster: C133, C136, and C224.

Belongs to the TtcA family. In terms of assembly, homodimer. Mg(2+) is required as a cofactor. Requires [4Fe-4S] cluster as cofactor.

The protein resides in the cytoplasm. The enzyme catalyses cytidine(32) in tRNA + S-sulfanyl-L-cysteinyl-[cysteine desulfurase] + AH2 + ATP = 2-thiocytidine(32) in tRNA + L-cysteinyl-[cysteine desulfurase] + A + AMP + diphosphate + H(+). The protein operates within tRNA modification. Its function is as follows. Catalyzes the ATP-dependent 2-thiolation of cytidine in position 32 of tRNA, to form 2-thiocytidine (s(2)C32). The sulfur atoms are provided by the cysteine/cysteine desulfurase (IscS) system. This is tRNA-cytidine(32) 2-sulfurtransferase from Polaromonas naphthalenivorans (strain CJ2).